A 296-amino-acid chain; its full sequence is D-alanine--D-alanine ligase (296 aa).

In terms of domain architecture, ATP-grasp spans 103–293 (KEILMHHRMP…FDSFVKRIIE (191 aa)). 129–180 (ISFPVAVKPSSGGSSIATFKVKSIQELKHAYEEASKYGEVMIEQWVTGKEIT) is a binding site for ATP. Positions 247, 260, and 262 each coordinate Mg(2+).

This sequence belongs to the D-alanine--D-alanine ligase family. Mg(2+) is required as a cofactor. Requires Mn(2+) as cofactor.

The protein resides in the cytoplasm. It catalyses the reaction 2 D-alanine + ATP = D-alanyl-D-alanine + ADP + phosphate + H(+). It functions in the pathway cell wall biogenesis; peptidoglycan biosynthesis. Its function is as follows. Cell wall formation. The chain is D-alanine--D-alanine ligase from Francisella tularensis subsp. novicida (strain U112).